Reading from the N-terminus, the 539-residue chain is T-complex protein 1 subunit delta (539 aa).

The interval 1 to 29 is disordered; sequence MPENVAPRSGATAGAAGGRGKGAYQDRDK. At Arg19 the chain carries Omega-N-methylarginine. Position 21 is an N6-acetyllysine (Lys21). Ser36 bears the Phosphoserine mark. Gly53 contacts ADP. Residue Gly53 coordinates ATP. Asp104 provides a ligand contact to Mg(2+). Residues Gly105, Thr106, Thr107, Ser108, Asn172, Ser173, and Lys174 each coordinate ADP. Positions 105 and 106 each coordinate ATP. Lys174 lines the ATP pocket. Phosphoserine occurs at positions 184 and 202. N6-acetyllysine occurs at positions 288, 302, 319, and 326. Gly425 is a binding site for ADP. A Phosphoserine modification is found at Ser444. Gln510 provides a ligand contact to ADP.

This sequence belongs to the TCP-1 chaperonin family. As to quaternary structure, component of the chaperonin-containing T-complex (TRiC), a hexadecamer composed of two identical back-to-back stacked rings enclosing a protein folding chamber. Each ring is made up of eight different subunits: TCP1/CCT1, CCT2, CCT3, CCT4, CCT5, CCT6A/CCT6, CCT7, CCT8. Interacts with PACRG. Interacts with DNAAF4. Interacts with DLEC1.

The protein resides in the cytoplasm. The protein localises to the melanosome. It localises to the cytoskeleton. Its subcellular location is the microtubule organizing center. It is found in the centrosome. The protein resides in the cilium basal body. The catalysed reaction is ATP + H2O = ADP + phosphate + H(+). Its function is as follows. Component of the chaperonin-containing T-complex (TRiC), a molecular chaperone complex that assists the folding of actin, tubulin and other proteins upon ATP hydrolysis. The TRiC complex mediates the folding of WRAP53/TCAB1, thereby regulating telomere maintenance. As part of the TRiC complex may play a role in the assembly of BBSome, a complex involved in ciliogenesis regulating transports vesicles to the cilia. The protein is T-complex protein 1 subunit delta (CCT4) of Homo sapiens (Human).